The chain runs to 280 residues: 2-dehydro-3-deoxyphosphooctonate aldolase (280 aa).

This sequence belongs to the KdsA family.

It is found in the cytoplasm. It carries out the reaction D-arabinose 5-phosphate + phosphoenolpyruvate + H2O = 3-deoxy-alpha-D-manno-2-octulosonate-8-phosphate + phosphate. It functions in the pathway carbohydrate biosynthesis; 3-deoxy-D-manno-octulosonate biosynthesis; 3-deoxy-D-manno-octulosonate from D-ribulose 5-phosphate: step 2/3. Its pathway is bacterial outer membrane biogenesis; lipopolysaccharide biosynthesis. The protein is 2-dehydro-3-deoxyphosphooctonate aldolase of Coxiella burnetii (strain CbuK_Q154) (Coxiella burnetii (strain Q154)).